The chain runs to 583 residues: MDLLWMPLLLVAARISAVHSSPEVNAGVSSIHITKPVHILEERNLLVLTPAGLTQMLNQTRFLMVLFHNPSSKQSRNLAEELGKAVEIMGKGKNGIGFGKVDITVEKELQQEFGITKAPQLKLFFEGNRSEPISCKGVVESTALVVWLRRQISQKAFLFNSSLQVAEFVTSRPLVIVGFFQDLEEEVAELFYDVIKDFPELTFGVITIGNAIGRFHVTLDSILVFKKGKIVNRQELINDSTNKQELNRVIKQHLTDFVIEYNAENKDLIYELYIMSHMLLFVSKSSESFGIIIQHYKLASKEFQNKILFILVNADEPRNRRVIEYFRVTEVDIPSVQILNLSSDARYKMPSDDITYENLKKFGRSFLSKNAKKHQSSEEIPKHWDQGLVKQLVGKNFNIVVFDKEKDVFVMFYAPWSKKCKMLFPLLEELGRKYQNHSTIIIAKIDITANDIQLVYLDRYPFFRLFPTDSQQAVLYKGEHTLKGFSDFLESYIKTSIEDEDELLSVEQNEVIEEEVRAKEKEVPMMKKELPEQQSPELENVTKHVSKLEESAGKKKTSEEVVVVAKPKGPPTQKKKPKVKEEL.

An N-terminal signal peptide occupies residues 1 to 17 (MDLLWMPLLLVAARISA). Residues N58, N128, N160, and N340 are each glycosylated (N-linked (GlcNAc...) asparagine). The Thioredoxin domain occupies 388-451 (LVKQLVGKNF…IAKIDITAND (64 aa)). 2 stretches are compositionally biased toward basic and acidic residues: residues 522 to 531 (EVPMMKKELP) and 540 to 559 (NVTKHVSKLEESAGKKKTSE). Positions 522–583 (EVPMMKKELP…KKKPKVKEEL (62 aa)) are disordered. Residue N540 is glycosylated (N-linked (GlcNAc...) asparagine). A compositionally biased stretch (basic residues) spans 573–583 (QKKKPKVKEEL). The Prevents secretion from ER motif lies at 580 to 583 (KEEL).

The protein belongs to the protein disulfide isomerase family. In terms of assembly, homodimer. The homodimer is not disulfide-linked. Interacts with ERO1A and CLGN. In terms of processing, N-glycosylated.

The protein localises to the endoplasmic reticulum. In terms of biological role, probable redox-inactive chaperone involved in spermatogenesis. This is Protein disulfide-isomerase-like protein of the testis (PDILT) from Macaca fascicularis (Crab-eating macaque).